The chain runs to 111 residues: uncharacterized protein (111 aa).

This sequence belongs to the UPF0440 family.

This is an uncharacterized protein from Pyrococcus furiosus (strain ATCC 43587 / DSM 3638 / JCM 8422 / Vc1).